The following is a 256-amino-acid chain: Imidazole glycerol phosphate synthase subunit HisF (256 aa).

Catalysis depends on residues D11 and D130.

The protein belongs to the HisA/HisF family. As to quaternary structure, heterodimer of HisH and HisF.

The protein localises to the cytoplasm. The catalysed reaction is 5-[(5-phospho-1-deoxy-D-ribulos-1-ylimino)methylamino]-1-(5-phospho-beta-D-ribosyl)imidazole-4-carboxamide + L-glutamine = D-erythro-1-(imidazol-4-yl)glycerol 3-phosphate + 5-amino-1-(5-phospho-beta-D-ribosyl)imidazole-4-carboxamide + L-glutamate + H(+). It functions in the pathway amino-acid biosynthesis; L-histidine biosynthesis; L-histidine from 5-phospho-alpha-D-ribose 1-diphosphate: step 5/9. In terms of biological role, IGPS catalyzes the conversion of PRFAR and glutamine to IGP, AICAR and glutamate. The HisF subunit catalyzes the cyclization activity that produces IGP and AICAR from PRFAR using the ammonia provided by the HisH subunit. This chain is Imidazole glycerol phosphate synthase subunit HisF, found in Prochlorococcus marinus (strain NATL1A).